The primary structure comprises 228 residues: SPbeta prophage-derived uncharacterized protein YomL (228 aa).

The signal sequence occupies residues 1-28 (MRKKRVITCVMAASLTLGSLLPAGYATA).

In Bacillus subtilis (strain 168), this protein is SPbeta prophage-derived uncharacterized protein YomL (yomL).